The sequence spans 422 residues: Serine--tRNA ligase (422 aa).

231 to 233 (TSE) is a binding site for L-serine. Residue 262–264 (RQE) coordinates ATP. Glutamate 285 serves as a coordination point for L-serine. ATP is bound at residue 349–352 (EISS). Serine 384 is a binding site for L-serine.

Belongs to the class-II aminoacyl-tRNA synthetase family. Type-1 seryl-tRNA synthetase subfamily. Homodimer. The tRNA molecule binds across the dimer.

The protein resides in the cytoplasm. It carries out the reaction tRNA(Ser) + L-serine + ATP = L-seryl-tRNA(Ser) + AMP + diphosphate + H(+). The enzyme catalyses tRNA(Sec) + L-serine + ATP = L-seryl-tRNA(Sec) + AMP + diphosphate + H(+). The protein operates within aminoacyl-tRNA biosynthesis; selenocysteinyl-tRNA(Sec) biosynthesis; L-seryl-tRNA(Sec) from L-serine and tRNA(Sec): step 1/1. In terms of biological role, catalyzes the attachment of serine to tRNA(Ser). Is also able to aminoacylate tRNA(Sec) with serine, to form the misacylated tRNA L-seryl-tRNA(Sec), which will be further converted into selenocysteinyl-tRNA(Sec). This Mycoplasma mycoides subsp. mycoides SC (strain CCUG 32753 / NCTC 10114 / PG1) protein is Serine--tRNA ligase.